The primary structure comprises 227 residues: Cytochrome c oxidase subunit 2 (227 aa).

Topologically, residues 1-14 are mitochondrial intermembrane; that stretch reads MAYPFQLGLQDATS. Residues 15–45 form a helical membrane-spanning segment; that stretch reads PIMEELLHFHDHTLMIVFLISSLVLYIISSM. At 46-59 the chain is on the mitochondrial matrix side; that stretch reads LTTKLTHTSTMDAQ. A helical transmembrane segment spans residues 60 to 87; sequence EVETVWTILPAIILVLIALPSLRILYMM. Residues 88-227 lie on the Mitochondrial intermembrane side of the membrane; sequence DEINNPSLTV…YFETWSALML (140 aa). Positions 161, 196, 198, 200, 204, and 207 each coordinate Cu cation. Glu198 is a binding site for Mg(2+). Tyr218 bears the Phosphotyrosine mark.

The protein belongs to the cytochrome c oxidase subunit 2 family. Component of the cytochrome c oxidase (complex IV, CIV), a multisubunit enzyme composed of 14 subunits. The complex is composed of a catalytic core of 3 subunits MT-CO1, MT-CO2 and MT-CO3, encoded in the mitochondrial DNA, and 11 supernumerary subunits COX4I, COX5A, COX5B, COX6A, COX6B, COX6C, COX7A, COX7B, COX7C, COX8 and NDUFA4, which are encoded in the nuclear genome. The complex exists as a monomer or a dimer and forms supercomplexes (SCs) in the inner mitochondrial membrane with NADH-ubiquinone oxidoreductase (complex I, CI) and ubiquinol-cytochrome c oxidoreductase (cytochrome b-c1 complex, complex III, CIII), resulting in different assemblies (supercomplex SCI(1)III(2)IV(1) and megacomplex MCI(2)III(2)IV(2)). Found in a complex with TMEM177, COA6, COX18, COX20, SCO1 and SCO2. Interacts with TMEM177 in a COX20-dependent manner. Interacts with COX20. Interacts with COX16. The cofactor is Cu cation.

It is found in the mitochondrion inner membrane. The enzyme catalyses 4 Fe(II)-[cytochrome c] + O2 + 8 H(+)(in) = 4 Fe(III)-[cytochrome c] + 2 H2O + 4 H(+)(out). In terms of biological role, component of the cytochrome c oxidase, the last enzyme in the mitochondrial electron transport chain which drives oxidative phosphorylation. The respiratory chain contains 3 multisubunit complexes succinate dehydrogenase (complex II, CII), ubiquinol-cytochrome c oxidoreductase (cytochrome b-c1 complex, complex III, CIII) and cytochrome c oxidase (complex IV, CIV), that cooperate to transfer electrons derived from NADH and succinate to molecular oxygen, creating an electrochemical gradient over the inner membrane that drives transmembrane transport and the ATP synthase. Cytochrome c oxidase is the component of the respiratory chain that catalyzes the reduction of oxygen to water. Electrons originating from reduced cytochrome c in the intermembrane space (IMS) are transferred via the dinuclear copper A center (CU(A)) of subunit 2 and heme A of subunit 1 to the active site in subunit 1, a binuclear center (BNC) formed by heme A3 and copper B (CU(B)). The BNC reduces molecular oxygen to 2 water molecules using 4 electrons from cytochrome c in the IMS and 4 protons from the mitochondrial matrix. The protein is Cytochrome c oxidase subunit 2 (MT-CO2) of Speothos venaticus (Bush dog).